The primary structure comprises 471 residues: Glutamate--tRNA ligase (471 aa).

A 'HIGH' region motif is present at residues 9–19 (PSPTGYLHVGG). Cys98, Cys100, Cys125, and His127 together coordinate Zn(2+). The short motif at 237-241 (KLSKR) is the 'KMSKS' region element. Lys240 is an ATP binding site.

It belongs to the class-I aminoacyl-tRNA synthetase family. Glutamate--tRNA ligase type 1 subfamily. As to quaternary structure, monomer. Zn(2+) serves as cofactor.

Its subcellular location is the cytoplasm. The catalysed reaction is tRNA(Glu) + L-glutamate + ATP = L-glutamyl-tRNA(Glu) + AMP + diphosphate. In terms of biological role, catalyzes the attachment of glutamate to tRNA(Glu) in a two-step reaction: glutamate is first activated by ATP to form Glu-AMP and then transferred to the acceptor end of tRNA(Glu). In Shigella sonnei (strain Ss046), this protein is Glutamate--tRNA ligase.